Consider the following 212-residue polypeptide: Thiamine-phosphate synthase (212 aa).

4-amino-2-methyl-5-(diphosphooxymethyl)pyrimidine-binding positions include 43-47 (QYRNK) and Asn-75. Mg(2+) contacts are provided by Asp-76 and Asp-95. Residue Ser-114 coordinates 4-amino-2-methyl-5-(diphosphooxymethyl)pyrimidine. A 2-[(2R,5Z)-2-carboxy-4-methylthiazol-5(2H)-ylidene]ethyl phosphate-binding site is contributed by 141 to 143 (SMT). Lys-144 lines the 4-amino-2-methyl-5-(diphosphooxymethyl)pyrimidine pocket. Gly-171 contributes to the 2-[(2R,5Z)-2-carboxy-4-methylthiazol-5(2H)-ylidene]ethyl phosphate binding site.

Belongs to the thiamine-phosphate synthase family. Mg(2+) is required as a cofactor.

It carries out the reaction 2-[(2R,5Z)-2-carboxy-4-methylthiazol-5(2H)-ylidene]ethyl phosphate + 4-amino-2-methyl-5-(diphosphooxymethyl)pyrimidine + 2 H(+) = thiamine phosphate + CO2 + diphosphate. It catalyses the reaction 2-(2-carboxy-4-methylthiazol-5-yl)ethyl phosphate + 4-amino-2-methyl-5-(diphosphooxymethyl)pyrimidine + 2 H(+) = thiamine phosphate + CO2 + diphosphate. The catalysed reaction is 4-methyl-5-(2-phosphooxyethyl)-thiazole + 4-amino-2-methyl-5-(diphosphooxymethyl)pyrimidine + H(+) = thiamine phosphate + diphosphate. It participates in cofactor biosynthesis; thiamine diphosphate biosynthesis; thiamine phosphate from 4-amino-2-methyl-5-diphosphomethylpyrimidine and 4-methyl-5-(2-phosphoethyl)-thiazole: step 1/1. In terms of biological role, condenses 4-methyl-5-(beta-hydroxyethyl)thiazole monophosphate (THZ-P) and 2-methyl-4-amino-5-hydroxymethyl pyrimidine pyrophosphate (HMP-PP) to form thiamine monophosphate (TMP). This chain is Thiamine-phosphate synthase, found in Nitrosomonas eutropha (strain DSM 101675 / C91 / Nm57).